A 1274-amino-acid polypeptide reads, in one-letter code: Virulence protein SSD1 (1274 aa).

The span at 1–13 (MSSSQDYNNNSNN) shows a compositional bias: low complexity. 4 disordered regions span residues 1–38 (MSSSQDYNNNSNNTPARVSSRKGKNLHVAHRRSPSELT), 61–124 (LEEK…GHSR), 138–337 (ANQK…TLFA), and 413–488 (KEKE…DDVE). Positions 19–32 (SSRKGKNLHVAHRR) are enriched in basic residues. Polar residues predominate over residues 72–81 (FTYPSAQGSS). The segment covering 95 to 106 (NRSSHSRSSSIN) has biased composition (low complexity). The segment covering 139–152 (NQKQSNRNSLSPTI) has biased composition (polar residues). Over residues 177-187 (GDTSGQSSSSH) the composition is skewed to low complexity. Residues 248–263 (SGSNTNTDGINSNWRA) show a composition bias toward polar residues. Low complexity predominate over residues 264-282 (QQQSPQQQQRQGGLLEPPQ). Gly residues predominate over residues 320-330 (QQGGHQGGGNN). Positions 413–437 (KEKEEKKRRKDNTLHSRPLTDDIHN) are enriched in basic and acidic residues. Residues 438 to 453 (DATSAPNTAEGSVTGT) show a composition bias toward polar residues. In terms of domain architecture, CSD2 spans 562 to 637 (VWFKPTDKKV…EIDSILRDNN (76 aa)). The RNB domain occupies 688 to 1001 (FVDHALHVKR…VHRQLKAVLN (314 aa)). Residues 1050-1136 (GQLLCMGTVV…KNKYRTSALQ (87 aa)) form the DIS3L2 C-terminal domain. The disordered stretch occupies residues 1174-1217 (SLKSNELHEVEKDETKSMPSSPTQSEIPKNVRTNSSSRISSSGN). Positions 1178-1189 (NELHEVEKDETK) are enriched in basic and acidic residues. A compositionally biased stretch (polar residues) spans 1190 to 1207 (SMPSSPTQSEIPKNVRTN).

It belongs to the RNR ribonuclease family.

Its function is as follows. Plays a role in resistance to host antimicrobial peptides such as protamine, RP-1, or human beta-defensin-2; allowing colonization of human tissues. Required for resistance to membrane permeabilization and maintenance of mitochondrial membrane potential upon exposure to RP-1. The polypeptide is Virulence protein SSD1 (SSD1) (Candida albicans (strain SC5314 / ATCC MYA-2876) (Yeast)).